The chain runs to 702 residues: Kinesin-like protein KIF3A (702 aa).

One can recognise a Kinesin motor domain in the interval 14-345 (NVKVVVRCRP…LRYANRAKNI (332 aa)). 100 to 107 (GQTGTGKT) lines the ATP pocket. The stretch at 355–593 (PKDALLRQFQ…LSRELRLQML (239 aa)) forms a coiled coil. Disordered stretches follow at residues 372-424 (KKLE…KMIE) and 667-702 (LMKL…SLLQ). Residues 376-400 (EGEEISGSDISGSEEDDDEEGEVGE) show a composition bias toward acidic residues. Positions 410–424 (DQAGKKKVSPDKMIE) are enriched in basic and acidic residues. Residues 600–702 (PRDYQEMIEN…PETVIDSLLQ (103 aa)) are globular. A compositionally biased stretch (basic residues) spans 675-690 (TSKGKARPKTGRRKRS). Ser690 bears the Phosphoserine mark.

This sequence belongs to the TRAFAC class myosin-kinesin ATPase superfamily. Kinesin family. Kinesin II subfamily. As to quaternary structure, heterodimer of KIF3A and KIF3B. Interacts with CIMAP3. Interacts with CLN3. Interacts with DCTN1. Interacts with FLCN. Interacts with AP3B1.

The protein resides in the cytoplasm. It is found in the cytoskeleton. It localises to the cell projection. Its subcellular location is the cilium. The protein localises to the microtubule organizing center. The protein resides in the centrosome. It is found in the centriole. Microtubule-based anterograde translocator for membranous organelles. Plus end-directed microtubule sliding activity in vitro. Plays a role in primary cilia formation. Plays a role in centriole cohesion and subdistal appendage organization and function. Regulates the formation of the subdistal appendage via recruitment of DCTN1 to the centriole. Also required for ciliary basal feet formation and microtubule anchoring to mother centriole. In Macaca fascicularis (Crab-eating macaque), this protein is Kinesin-like protein KIF3A (KIF3A).